Here is a 244-residue protein sequence, read N- to C-terminus: Ubiquitin carboxyl-terminal hydrolase mug105 (244 aa).

C42 functions as the Nucleophile in the catalytic mechanism. H165 serves as the catalytic Proton acceptor. D183 is an active-site residue.

It belongs to the peptidase C78 family. ZUFSP subfamily.

It is found in the cytoplasm. It carries out the reaction Thiol-dependent hydrolysis of ester, thioester, amide, peptide and isopeptide bonds formed by the C-terminal Gly of ubiquitin (a 76-residue protein attached to proteins as an intracellular targeting signal).. Its function is as follows. Deubiquitinase with endodeubiquitinase activity that preferentially cleaves 'Lys-48'-linked polyubiquitin chains. Shows only weak activity against 'Lys-63' and 'Lys-11'-linked chains. Has a role in meiosis. The polypeptide is Ubiquitin carboxyl-terminal hydrolase mug105 (mug105) (Schizosaccharomyces pombe (strain 972 / ATCC 24843) (Fission yeast)).